The sequence spans 626 residues: Elongation factor 4 (626 aa).

Positions 14 to 195 (SLIRNFCIIA…RIVVDVPAPT (182 aa)) constitute a tr-type G domain. Residues 26–31 (DHGKST) and 142–145 (NKID) contribute to the GTP site. The disordered stretch occupies residues 603–626 (LSTGEGGNDRDTKDKIRAAQKSEG). The segment covering 609 to 626 (GNDRDTKDKIRAAQKSEG) has biased composition (basic and acidic residues).

It belongs to the TRAFAC class translation factor GTPase superfamily. Classic translation factor GTPase family. LepA subfamily.

It is found in the cell membrane. It catalyses the reaction GTP + H2O = GDP + phosphate + H(+). Required for accurate and efficient protein synthesis under certain stress conditions. May act as a fidelity factor of the translation reaction, by catalyzing a one-codon backward translocation of tRNAs on improperly translocated ribosomes. Back-translocation proceeds from a post-translocation (POST) complex to a pre-translocation (PRE) complex, thus giving elongation factor G a second chance to translocate the tRNAs correctly. Binds to ribosomes in a GTP-dependent manner. The protein is Elongation factor 4 of Bifidobacterium animalis subsp. lactis (strain AD011).